The following is a 78-amino-acid chain: MSDTAERVKKIVVEHLGVDADKVTEGASFIDDLGADSLDTVELVMAFEEEFGVEIPDDAAETILTVGDAVKFIDKASA.

In terms of domain architecture, Carrier spans 2–77 (SDTAERVKKI…DAVKFIDKAS (76 aa)). Serine 37 is subject to O-(pantetheine 4'-phosphoryl)serine.

This sequence belongs to the acyl carrier protein (ACP) family. Post-translationally, 4'-phosphopantetheine is transferred from CoA to a specific serine of apo-ACP by AcpS. This modification is essential for activity because fatty acids are bound in thioester linkage to the sulfhydryl of the prosthetic group.

It is found in the cytoplasm. It functions in the pathway lipid metabolism; fatty acid biosynthesis. Its function is as follows. Carrier of the growing fatty acid chain in fatty acid biosynthesis. The polypeptide is Acyl carrier protein (Brucella abortus (strain S19)).